Reading from the N-terminus, the 237-residue chain is UPF0502 protein RB6530 (237 aa).

Residues 187-202 (ASSAAPSQAESGSTSP) are compositionally biased toward polar residues. The segment at 187-211 (ASSAAPSQAESGSTSPAKAANDDRI) is disordered.

The protein belongs to the UPF0502 family.

In Rhodopirellula baltica (strain DSM 10527 / NCIMB 13988 / SH1), this protein is UPF0502 protein RB6530.